The chain runs to 1167 residues: ATP-dependent helicase/deoxyribonuclease subunit B (1167 aa).

The UvrD-like helicase ATP-binding domain maps to 1 to 359; the sequence is MSLRFLLGRS…IRQTEAYRDL (359 aa). 8 to 15 lines the ATP pocket; sequence GRSGSGKT. The UvrD-like helicase C-terminal domain occupies 282-588; that stretch reads ANRRHEDRAL…EFSLVPPAMD (307 aa). Residues cysteine 804, cysteine 1126, cysteine 1129, and cysteine 1135 each contribute to the [4Fe-4S] cluster site.

The protein belongs to the helicase family. AddB/RexB type 1 subfamily. In terms of assembly, heterodimer of AddA and AddB. Mg(2+) serves as cofactor. It depends on [4Fe-4S] cluster as a cofactor.

Functionally, the heterodimer acts as both an ATP-dependent DNA helicase and an ATP-dependent, dual-direction single-stranded exonuclease. Recognizes the chi site generating a DNA molecule suitable for the initiation of homologous recombination. The AddB subunit has 5' -&gt; 3' nuclease activity but not helicase activity. The protein is ATP-dependent helicase/deoxyribonuclease subunit B of Geobacillus kaustophilus (strain HTA426).